A 778-amino-acid polypeptide reads, in one-letter code: Serine/threonine-protein kinase BRSK1 (778 aa).

A compositionally biased stretch (gly residues) spans 1-12 (MSSGSKEGGGGS). The segment at 1-29 (MSSGSKEGGGGSPAYHLPHPHPHPPQHAQ) is disordered. The Protein kinase domain maps to 34–285 (YRLEKTLGKG…LEQIQKHPWY (252 aa)). ATP contacts are provided by residues 40 to 48 (LGKGQTGLV) and Lys-63. Catalysis depends on Asp-156, which acts as the Proton acceptor. A Phosphothreonine; by LKB1 modification is found at Thr-189. Positions 314–356 (ELDPDVLESMASLGCFRDRERLHRELRSEEENQEKMIYYLLLD) constitute a UBA domain. Over residues 362 to 383 (PSCEDQDLPPRNDVDPPRKRVD) the composition is skewed to basic and acidic residues. The disordered stretch occupies residues 362 to 548 (PSCEDQDLPP…SPGGGVGGAA (187 aa)). Phosphoserine occurs at positions 399, 443, 447, and 450. Over residues 430-457 (SRSVSGASTGLSSSPLSSPRSPVFSFSP) the composition is skewed to low complexity. Arg-466, Arg-481, Arg-484, and Arg-498 each carry omega-N-methylarginine. The span at 491–508 (QPPPPSARSTPLPGPPGS) shows a compositional bias: pro residues. Residue Ser-508 is modified to Phosphoserine. A compositionally biased stretch (low complexity) spans 509–533 (PRSSGGTPLHSPLHTPRASPTGTPG). An Omega-N-methylarginine modification is found at Arg-525. A phosphothreonine mark is found at Thr-529 and Thr-535. At Arg-550 the chain carries Omega-N-methylarginine. Residues 560-588 (FLGSPRFHRRKMQVPTAEEMSSLTPESSP) are disordered. The residue at position 583 (Thr-583) is a Phosphothreonine. 3 positions are modified to phosphoserine: Ser-586, Ser-587, and Ser-601. The interval 719 to 778 (QPSVQALADEKNGAQTRPAGTPPRSLQPPPGRSDPDLSSSPRRGPPKDKKLLATNGTPLP) is disordered.

Belongs to the protein kinase superfamily. CAMK Ser/Thr protein kinase family. SNF1 subfamily. Requires Mg(2+) as cofactor. Phosphorylated at Thr-189 by STK11/LKB1 in complex with STE20-related adapter-alpha (STRADA) pseudo kinase and CAB39. Not phosphorylated at Thr-189 by CaMKK2. In contrast, it is phosphorylated and activated by CaMKK1. May be inactivated via dephosphorylation of Thr-189 by PP2C. Present in the gray matter of the brain and spinal cord (at protein level). Expressed in the nervous system, distributed within the brain and spinal cord of embryonic and postnatal animals.

Its subcellular location is the cytoplasm. It localises to the nucleus. The protein localises to the cytoskeleton. It is found in the microtubule organizing center. The protein resides in the centrosome. Its subcellular location is the synapse. It localises to the presynaptic active zone. The protein localises to the cytoplasmic vesicle. It is found in the secretory vesicle. The protein resides in the synaptic vesicle. The enzyme catalyses L-seryl-[protein] + ATP = O-phospho-L-seryl-[protein] + ADP + H(+). The catalysed reaction is L-threonyl-[protein] + ATP = O-phospho-L-threonyl-[protein] + ADP + H(+). It carries out the reaction L-seryl-[tau protein] + ATP = O-phospho-L-seryl-[tau protein] + ADP + H(+). It catalyses the reaction L-threonyl-[tau protein] + ATP = O-phospho-L-threonyl-[tau protein] + ADP + H(+). With respect to regulation, activated by phosphorylation on Thr-189 by STK11/LKB1. Its function is as follows. Serine/threonine-protein kinase that plays a key role in polarization of neurons and centrosome duplication. Phosphorylates CDC25B, CDC25C, MAPT/TAU, RIMS1, TUBG1, TUBG2 and WEE1. Following phosphorylation and activation by STK11/LKB1, acts as a key regulator of polarization of cortical neurons, probably by mediating phosphorylation of microtubule-associated proteins such as MAPT/TAU at 'Thr-504' and 'Ser-554'. Also regulates neuron polarization by mediating phosphorylation of WEE1 at 'Ser-642' in postmitotic neurons, leading to down-regulate WEE1 activity in polarized neurons. In neurons, localizes to synaptic vesicles and plays a role in neurotransmitter release, possibly by phosphorylating RIMS1. Also acts as a positive regulator of centrosome duplication by mediating phosphorylation of gamma-tubulin (TUBG1 and TUBG2) at 'Ser-131', leading to translocation of gamma-tubulin and its associated proteins to the centrosome. Involved in the UV-induced DNA damage checkpoint response, probably by inhibiting CDK1 activity through phosphorylation and activation of WEE1, and inhibition of CDC25B and CDC25C. The protein is Serine/threonine-protein kinase BRSK1 (Brsk1) of Mus musculus (Mouse).